The sequence spans 209 residues: 7-carboxy-7-deazaguanine synthase (209 aa).

Substrate-binding positions include 10 to 12 (IQG) and R25. In terms of domain architecture, Radical SAM core spans 16-205 (YAGLPMLFVR…PQIHKIIYGD (190 aa)). [4Fe-4S] cluster contacts are provided by C29, C33, and C36. T38 provides a ligand contact to Mg(2+). Residue T68 coordinates substrate. G70 contributes to the S-adenosyl-L-methionine binding site.

The protein belongs to the radical SAM superfamily. 7-carboxy-7-deazaguanine synthase family. In terms of assembly, homodimer. Requires [4Fe-4S] cluster as cofactor. S-adenosyl-L-methionine serves as cofactor. The cofactor is Mg(2+).

The catalysed reaction is 6-carboxy-5,6,7,8-tetrahydropterin + H(+) = 7-carboxy-7-deazaguanine + NH4(+). It participates in purine metabolism; 7-cyano-7-deazaguanine biosynthesis. Its function is as follows. Catalyzes the complex heterocyclic radical-mediated conversion of 6-carboxy-5,6,7,8-tetrahydropterin (CPH4) to 7-carboxy-7-deazaguanine (CDG), a step common to the biosynthetic pathways of all 7-deazapurine-containing compounds. The protein is 7-carboxy-7-deazaguanine synthase of Thermoplasma acidophilum (strain ATCC 25905 / DSM 1728 / JCM 9062 / NBRC 15155 / AMRC-C165).